A 713-amino-acid chain; its full sequence is Glycine--tRNA ligase beta subunit (713 aa).

This sequence belongs to the class-II aminoacyl-tRNA synthetase family. In terms of assembly, tetramer of two alpha and two beta subunits.

It localises to the cytoplasm. It catalyses the reaction tRNA(Gly) + glycine + ATP = glycyl-tRNA(Gly) + AMP + diphosphate. The chain is Glycine--tRNA ligase beta subunit from Leptothrix cholodnii (strain ATCC 51168 / LMG 8142 / SP-6) (Leptothrix discophora (strain SP-6)).